Consider the following 322-residue polypeptide: Ribosomal RNA small subunit methyltransferase H (322 aa).

S-adenosyl-L-methionine contacts are provided by residues 42–44 (GGH), Asp-62, Phe-86, Asp-107, and Gln-114.

The protein belongs to the methyltransferase superfamily. RsmH family.

It is found in the cytoplasm. It catalyses the reaction cytidine(1402) in 16S rRNA + S-adenosyl-L-methionine = N(4)-methylcytidine(1402) in 16S rRNA + S-adenosyl-L-homocysteine + H(+). Its function is as follows. Specifically methylates the N4 position of cytidine in position 1402 (C1402) of 16S rRNA. In Janthinobacterium sp. (strain Marseille) (Minibacterium massiliensis), this protein is Ribosomal RNA small subunit methyltransferase H.